The primary structure comprises 273 residues: Dermonecrotic toxin LdSicTox-alphaIB3aii (273 aa).

His5 is a catalytic residue. Residues Glu25 and Asp27 each coordinate Mg(2+). His41 acts as the Nucleophile in catalysis. 2 cysteine pairs are disulfide-bonded: Cys45–Cys51 and Cys47–Cys190. Asp85 serves as a coordination point for Mg(2+).

It belongs to the arthropod phospholipase D family. Class II subfamily. Mg(2+) serves as cofactor. Expressed by the venom gland.

The protein localises to the secreted. It carries out the reaction an N-(acyl)-sphingosylphosphocholine = an N-(acyl)-sphingosyl-1,3-cyclic phosphate + choline. The catalysed reaction is an N-(acyl)-sphingosylphosphoethanolamine = an N-(acyl)-sphingosyl-1,3-cyclic phosphate + ethanolamine. It catalyses the reaction a 1-acyl-sn-glycero-3-phosphocholine = a 1-acyl-sn-glycero-2,3-cyclic phosphate + choline. The enzyme catalyses a 1-acyl-sn-glycero-3-phosphoethanolamine = a 1-acyl-sn-glycero-2,3-cyclic phosphate + ethanolamine. In terms of biological role, dermonecrotic toxins cleave the phosphodiester linkage between the phosphate and headgroup of certain phospholipids (sphingolipid and lysolipid substrates), forming an alcohol (often choline) and a cyclic phosphate. This toxin acts on sphingomyelin (SM). It may also act on ceramide phosphoethanolamine (CPE), lysophosphatidylcholine (LPC) and lysophosphatidylethanolamine (LPE), but not on lysophosphatidylserine (LPS), and lysophosphatidylglycerol (LPG). It acts by transphosphatidylation, releasing exclusively cyclic phosphate products as second products. Induces dermonecrosis, hemolysis, increased vascular permeability, edema, inflammatory response, and platelet aggregation. This is Dermonecrotic toxin LdSicTox-alphaIB3aii from Loxosceles deserta (Desert recluse spider).